A 540-amino-acid chain; its full sequence is Phosphoenolpyruvate carboxykinase (ATP) (540 aa).

Arg65 contributes to the substrate binding site. The residue at position 87 (Lys87) is an N6-acetyllysine. Residues Tyr207 and Lys213 each coordinate substrate. ATP is bound by residues Lys213, His232, and 248-256 (GLSGTGKTT). Mn(2+)-binding residues include Lys213 and His232. Mn(2+) is bound at residue Asp269. ATP-binding positions include Glu297, Arg333, 449–450 (RI), and Thr455. Arg333 lines the substrate pocket. At Lys523 the chain carries N6-acetyllysine.

The protein belongs to the phosphoenolpyruvate carboxykinase (ATP) family. In terms of assembly, monomer. Requires Mn(2+) as cofactor.

The protein resides in the cytoplasm. The enzyme catalyses oxaloacetate + ATP = phosphoenolpyruvate + ADP + CO2. The protein operates within carbohydrate biosynthesis; gluconeogenesis. Involved in the gluconeogenesis. Catalyzes the conversion of oxaloacetate (OAA) to phosphoenolpyruvate (PEP) through direct phosphoryl transfer between the nucleoside triphosphate and OAA. The polypeptide is Phosphoenolpyruvate carboxykinase (ATP) (Shigella dysenteriae serotype 1 (strain Sd197)).